The following is a 407-amino-acid chain: BRCA1-A complex subunit Abraxas 1 (407 aa).

Residues 7–155 (LGVLSGFVLG…THCLEHALYK (149 aa)) form the MPN domain. S48 bears the Phosphoserine mark. The stretch at 209–259 (LKEVHKINEMYAAVQEELKSICQKVEQSEREVEKLLMDVNQLKEVRRTQQA) forms a coiled coil. The interval 344-407 (KRKALDTHDQ…DADYPRSPTF (64 aa)) is disordered. The span at 347–366 (ALDTHDQGSVKRPRLLETES) shows a compositional bias: basic and acidic residues. A phosphoserine mark is found at S384, S385, S394, and S404. Positions 388–399 (IDIEMGSPEDDA) are enriched in acidic residues. The pSXXF motif signature appears at 404 to 407 (SPTF).

The protein belongs to the FAM175 family. Abraxas subfamily. In terms of assembly, component of the ARISC complex, at least composed of UIMC1/RAP80, ABRAXAS1, BRCC3/BRCC36, BABAM2 and BABAM1/NBA1. Component of the BRCA1-A complex, at least composed of the BRCA1, BARD1, UIMC1/RAP80, ABRAXAS1, BRCC3/BRCC36, BABAM2 and BABAM1/NBA1. In the complex, interacts directly with UIMC1/RAP80, BRCC3/BRCC36 and BABAM2. Homodimer. Interacts directly (when phosphorylated at Ser-404) with BRCA1. The phosphorylated homodimer can interact directly with two BRCA1 chains, giving rise to a heterotetramer. Binds polyubiquitin. Phosphorylation of Ser-404 of the pSXXF motif by ATM or ATR constitutes a specific recognition motif for the BRCT domain of BRCA1.

It is found in the nucleus. Functionally, involved in DNA damage response and double-strand break (DSB) repair. Component of the BRCA1-A complex, acting as a central scaffold protein that assembles the various components of the complex and mediates the recruitment of BRCA1. The BRCA1-A complex specifically recognizes 'Lys-63'-linked ubiquitinated histones H2A and H2AX at DNA lesion sites, leading to target the BRCA1-BARD1 heterodimer to sites of DNA damage at DSBs. This complex also possesses deubiquitinase activity that specifically removes 'Lys-63'-linked ubiquitin on histones H2A and H2AX. This is BRCA1-A complex subunit Abraxas 1 from Mus musculus (Mouse).